We begin with the raw amino-acid sequence, 184 residues long: Ribosome-recycling factor (184 aa).

Belongs to the RRF family.

The protein localises to the cytoplasm. Its function is as follows. Responsible for the release of ribosomes from messenger RNA at the termination of protein biosynthesis. May increase the efficiency of translation by recycling ribosomes from one round of translation to another. The protein is Ribosome-recycling factor of Borrelia recurrentis (strain A1).